The following is a 200-amino-acid chain: A-type ATP synthase subunit E 3 (200 aa).

Belongs to the V-ATPase E subunit family. Has multiple subunits with at least A(3), B(3), C, D, E, F, H, I and proteolipid K(x).

It localises to the cell membrane. Component of the A-type ATP synthase that produces ATP from ADP in the presence of a proton gradient across the membrane. In Methanospirillum hungatei JF-1 (strain ATCC 27890 / DSM 864 / NBRC 100397 / JF-1), this protein is A-type ATP synthase subunit E 3.